Here is a 355-residue protein sequence, read N- to C-terminus: Uroporphyrinogen decarboxylase (355 aa).

Substrate contacts are provided by residues 27–31 (RQAGR), D77, Y154, T209, and H328.

Belongs to the uroporphyrinogen decarboxylase family. In terms of assembly, homodimer.

The protein localises to the cytoplasm. The enzyme catalyses uroporphyrinogen III + 4 H(+) = coproporphyrinogen III + 4 CO2. It functions in the pathway porphyrin-containing compound metabolism; protoporphyrin-IX biosynthesis; coproporphyrinogen-III from 5-aminolevulinate: step 4/4. In terms of biological role, catalyzes the decarboxylation of four acetate groups of uroporphyrinogen-III to yield coproporphyrinogen-III. This Dechloromonas aromatica (strain RCB) protein is Uroporphyrinogen decarboxylase.